We begin with the raw amino-acid sequence, 123 residues long: Large ribosomal subunit protein uL24 (123 aa).

The protein belongs to the universal ribosomal protein uL24 family. In terms of assembly, part of the 50S ribosomal subunit.

In terms of biological role, one of two assembly initiator proteins, it binds directly to the 5'-end of the 23S rRNA, where it nucleates assembly of the 50S subunit. Located at the polypeptide exit tunnel on the outside of the subunit. The chain is Large ribosomal subunit protein uL24 from Pyrobaculum islandicum (strain DSM 4184 / JCM 9189 / GEO3).